The primary structure comprises 53 residues: Large ribosomal subunit protein eL24 (53 aa).

4 residues coordinate Zn(2+): Cys-4, Cys-7, Cys-30, and Cys-34. A C4-type zinc finger spans residues 4-34 (CSFCNKEIEEGTGKMYVKKDGSIYFFCSSKC).

It belongs to the eukaryotic ribosomal protein eL24 family. Part of the 50S ribosomal subunit. Forms a cluster with proteins L3 and L14. Requires Zn(2+) as cofactor.

Binds to the 23S rRNA. In Methanobrevibacter smithii (strain ATCC 35061 / DSM 861 / OCM 144 / PS), this protein is Large ribosomal subunit protein eL24.